We begin with the raw amino-acid sequence, 170 residues long: ATP synthase subunit b (170 aa).

The helical transmembrane segment at 11-31 threads the bilayer; sequence AFTFGDAFFTLFAFAILLVLI.

Belongs to the ATPase B chain family. As to quaternary structure, F-type ATPases have 2 components, F(1) - the catalytic core - and F(0) - the membrane proton channel. F(1) has five subunits: alpha(3), beta(3), gamma(1), delta(1), epsilon(1). F(0) has three main subunits: a(1), b(2) and c(10-14). The alpha and beta chains form an alternating ring which encloses part of the gamma chain. F(1) is attached to F(0) by a central stalk formed by the gamma and epsilon chains, while a peripheral stalk is formed by the delta and b chains.

It is found in the cell membrane. F(1)F(0) ATP synthase produces ATP from ADP in the presence of a proton or sodium gradient. F-type ATPases consist of two structural domains, F(1) containing the extramembraneous catalytic core and F(0) containing the membrane proton channel, linked together by a central stalk and a peripheral stalk. During catalysis, ATP synthesis in the catalytic domain of F(1) is coupled via a rotary mechanism of the central stalk subunits to proton translocation. In terms of biological role, component of the F(0) channel, it forms part of the peripheral stalk, linking F(1) to F(0). This Listeria monocytogenes serotype 4b (strain F2365) protein is ATP synthase subunit b.